The chain runs to 423 residues: Core protease OPG083 (423 aa).

Active-site residues include H241, D248, and C328.

It belongs to the peptidase C57 family.

Its subcellular location is the virion. In terms of biological role, late protein responsible for processing most or all of the viral core and membrane proteins known to undergo morphogenesis-associated proteolysis. These proteolytic events are involved in the transformation of immature virions (IV) into mature virions (MV). Probably cleaves at least the OPG129/A3, OPG136/A10, OPG098/L4, and OPG144/A17 precursors preferentially at Ala-Gly-|-Ala motifs. Also seems to process Ala-Gly-|-Ser and Ala-Gly-|-Thr motifs. This chain is Core protease OPG083 (OPG083), found in Bos taurus (Bovine).